Reading from the N-terminus, the 752-residue chain is Myotubularin-related protein 10 (752 aa).

In terms of domain architecture, Myotubularin phosphatase spans 206–636 (FDCSSDWDRE…SHLSVWKLYF (431 aa)). The stretch at 652–683 (TAFHKLSVLTDEIEMLQNQLRQYKGAAGTANT) forms a coiled coil.

It belongs to the protein-tyrosine phosphatase family. Non-receptor class myotubularin subfamily.

The polypeptide is Myotubularin-related protein 10 (mtmr10) (Danio rerio (Zebrafish)).